A 343-amino-acid chain; its full sequence is Single-pass membrane and coiled-coil domain-containing protein 2 (343 aa).

Residues 86–99 (EHDQDLSKQDKQET) are compositionally biased toward basic and acidic residues. The interval 86–108 (EHDQDLSKQDKQETDVDEDPQAS) is disordered. The stretch at 152 to 238 (TEKIDNIIKK…SAKLRMYQME (87 aa)) forms a coiled coil. A helical transmembrane segment spans residues 284-304 (IFIMFDVLTVTGLLCYILFFG).

It is found in the membrane. In Homo sapiens (Human), this protein is Single-pass membrane and coiled-coil domain-containing protein 2 (SMCO2).